Reading from the N-terminus, the 374-residue chain is Lactoyl-CoA dehydratase subunit beta (374 aa).

This sequence belongs to the FldB/FldC dehydratase alpha/beta subunit family. Heterodimer of an alpha (LcdA) and a beta (LcdB) subunit. [4Fe-4S] cluster is required as a cofactor. The cofactor is FMN. Requires riboflavin as cofactor. It depends on Mg(2+) as a cofactor.

It catalyses the reaction (R)-lactoyl-CoA = acryloyl-CoA + H2O. The catalysed reaction is (2R)-hydroxybutanoyl-CoA = (2E)-butenoyl-CoA + H2O. Activated by the LcdC protein. Involved in the acrylate pathway for the conversion of D-lactic acid to propionic acid. Catalyzes the reversible dehydration of Lactoyl-CoA and 2-hydroxybutyroyl-CoA to acryloyl-CoA and crotonyl-CoA, respectively. The polypeptide is Lactoyl-CoA dehydratase subunit beta (lcdB) (Anaerotignum propionicum (Clostridium propionicum)).